Here is a 110-residue protein sequence, read N- to C-terminus: MTLEKTTRMNYLFDFYQSLLTAKQKSYMSLYYLDDFSLGEIADEYEVSRQAVYDNIKRTEAMLEQYEEKLLLFKKFKERKELLKKMRELVADSAQTEEAEALIESLEKLD.

This sequence belongs to the UPF0122 family.

Its function is as follows. Might take part in the signal recognition particle (SRP) pathway. This is inferred from the conservation of its genetic proximity to ftsY/ffh. May be a regulatory protein. The protein is UPF0122 protein BPUM_1495 of Bacillus pumilus (strain SAFR-032).